We begin with the raw amino-acid sequence, 424 residues long: 3-phosphoshikimate 1-carboxyvinyltransferase (424 aa).

Positions 21, 22, and 26 each coordinate 3-phosphoshikimate. K21 is a binding site for phosphoenolpyruvate. G92 and R120 together coordinate phosphoenolpyruvate. 3-phosphoshikimate-binding residues include S163, S164, Q165, S191, D306, and K333. Q165 provides a ligand contact to phosphoenolpyruvate. The active-site Proton acceptor is the D306. Phosphoenolpyruvate contacts are provided by R337, R379, and K405.

It belongs to the EPSP synthase family. Monomer.

It localises to the cytoplasm. It catalyses the reaction 3-phosphoshikimate + phosphoenolpyruvate = 5-O-(1-carboxyvinyl)-3-phosphoshikimate + phosphate. Its pathway is metabolic intermediate biosynthesis; chorismate biosynthesis; chorismate from D-erythrose 4-phosphate and phosphoenolpyruvate: step 6/7. Catalyzes the transfer of the enolpyruvyl moiety of phosphoenolpyruvate (PEP) to the 5-hydroxyl of shikimate-3-phosphate (S3P) to produce enolpyruvyl shikimate-3-phosphate and inorganic phosphate. The sequence is that of 3-phosphoshikimate 1-carboxyvinyltransferase from Clostridium perfringens (strain ATCC 13124 / DSM 756 / JCM 1290 / NCIMB 6125 / NCTC 8237 / Type A).